The primary structure comprises 227 residues: Ribonuclease 3 (227 aa).

In terms of domain architecture, RNase III spans Leu-4–Gly-126. Glu-39 provides a ligand contact to Mg(2+). Residue Asp-43 is part of the active site. Mg(2+) contacts are provided by Asp-112 and Glu-115. The active site involves Glu-115. The DRBM domain maps to Asp-153 to Ile-226.

It belongs to the ribonuclease III family. In terms of assembly, homodimer. Requires Mg(2+) as cofactor.

The protein localises to the cytoplasm. The catalysed reaction is Endonucleolytic cleavage to 5'-phosphomonoester.. In terms of biological role, digests double-stranded RNA. Involved in the processing of primary rRNA transcript to yield the immediate precursors to the large and small rRNAs (23S and 16S). Processes some mRNAs, and tRNAs when they are encoded in the rRNA operon. Processes pre-crRNA and tracrRNA of type II CRISPR loci if present in the organism. The polypeptide is Ribonuclease 3 (Haemophilus influenzae (strain ATCC 51907 / DSM 11121 / KW20 / Rd)).